Here is a 182-residue protein sequence, read N- to C-terminus: Small ribosomal subunit protein uS4c (182 aa).

The interval 13–34 (GLTSKRPRSGSDPKNQLRSGKR) is disordered. One can recognise an S4 RNA-binding domain in the interval 82–143 (MRLDNILFRL…KQRSKALIQN (62 aa)).

It belongs to the universal ribosomal protein uS4 family. Part of the 30S ribosomal subunit. Contacts protein S5. The interaction surface between S4 and S5 is involved in control of translational fidelity.

Its subcellular location is the plastid. The protein localises to the chloroplast. One of the primary rRNA binding proteins, it binds directly to 16S rRNA where it nucleates assembly of the body of the 30S subunit. Functionally, with S5 and S12 plays an important role in translational accuracy. The sequence is that of Small ribosomal subunit protein uS4c (rps4) from Iris lutescens (Crimean iris).